The primary structure comprises 345 residues: uncharacterized protein (345 aa).

The protein belongs to the transketolase family. The cofactor is thiamine diphosphate.

This is an uncharacterized protein from Sinorhizobium fredii (strain NBRC 101917 / NGR234).